The following is a 127-amino-acid chain: Glycine cleavage system H protein (127 aa).

In terms of domain architecture, Lipoyl-binding spans 22–104 (QVVIGITHFA…YEGAWMVKVE (83 aa)). Lysine 63 carries the N6-lipoyllysine modification.

Belongs to the GcvH family. As to quaternary structure, the glycine cleavage system is composed of four proteins: P, T, L and H. It depends on (R)-lipoate as a cofactor.

In terms of biological role, the glycine cleavage system catalyzes the degradation of glycine. The H protein shuttles the methylamine group of glycine from the P protein to the T protein. Is also involved in protein lipoylation via its role as an octanoyl/lipoyl carrier protein intermediate. The protein is Glycine cleavage system H protein of Bacillus cytotoxicus (strain DSM 22905 / CIP 110041 / 391-98 / NVH 391-98).